We begin with the raw amino-acid sequence, 405 residues long: Cysteine desulfurase IscS (405 aa).

Asn-156 is a pyridoxal 5'-phosphate binding site. Lys-207 is subject to N6-(pyridoxal phosphate)lysine. Residue Cys-329 is the Cysteine persulfide intermediate of the active site. [2Fe-2S] cluster is bound at residue Cys-329.

This sequence belongs to the class-V pyridoxal-phosphate-dependent aminotransferase family. NifS/IscS subfamily. As to quaternary structure, homodimer. Forms a heterotetramer with IscU, interacts with other sulfur acceptors. The cofactor is pyridoxal 5'-phosphate.

The protein localises to the cytoplasm. The catalysed reaction is (sulfur carrier)-H + L-cysteine = (sulfur carrier)-SH + L-alanine. Its pathway is cofactor biosynthesis; iron-sulfur cluster biosynthesis. Master enzyme that delivers sulfur to a number of partners involved in Fe-S cluster assembly, tRNA modification or cofactor biosynthesis. Catalyzes the removal of elemental sulfur atoms from cysteine to produce alanine. Functions as a sulfur delivery protein for Fe-S cluster synthesis onto IscU, an Fe-S scaffold assembly protein, as well as other S acceptor proteins. The protein is Cysteine desulfurase IscS of Dechloromonas aromatica (strain RCB).